Here is a 761-residue protein sequence, read N- to C-terminus: MAKRTFSSLEAFLIFLLVMMTAITVALLTLLFVTSGTIENHKDSGNHWVSTTQGPTTTQSSPTTQTPTTQTPDLPPSQNFSGYYIGVGRADCTGQVSDINLMGYGKNGQNAQGLLTRLFSRAFILADPDGSNRMAFVSVELCMISQRLRLEVLKRLQSKYGSLYRRDNVILSATHTHSGPAGFFQYTLYILASEGFSNRTFQYIVSGIVKSIDIAHTNLKPGKVLINKGNVANVQINRSPSSYLQNPPSERARYSSDTDKEMVVLKLVDLNGEDLGLISWFAVHPVSMNNSNHLVNSDNMGYAAYLFEQEKNRGYLPGQGPFVAGFASSNLGDVSPNILGPHCVNTGESCDNDKSTCPSGGPSMCMASGPGQDMFESTHIIGRVIYQKAKELHASASQEVTGPVLTAHQWVNMTDVSVQLNATHTVKTCKAALGYSFAAGTIDGVSGLNITQGTTEGNLFWDTLRDQLLGKPSEEIIECQKPKPILIHTGELTKPHPWQPDIVDIQIVTLGSLAIAAIPGEFTTMSGRRLREAVKKEFALYGMKDMTVVIAGLSNVYTHYITTYEEYQAQRYEAASTIYGPHTLSAYIQLFRALAKAIATDTVANMSSGPEPPFFKNLIGSLIPNIADRAPIGKQFGDVLQPAKPEYRVGEVVEVVFVGANPKNSAENQTHQTFLTVEKYEDSVANWQIMHNDASWETRFYWHKGVLGLSNATIHWHIPDTALPGVYRIRYFGHNRKQELLKPAVILAFEGISSPFEIVTT.

Topologically, residues 1-11 (MAKRTFSSLEA) are cytoplasmic. A helical; Signal-anchor for type II membrane protein transmembrane segment spans residues 12–32 (FLIFLLVMMTAITVALLTLLF). At 33–761 (VTSGTIENHK…ISSPFEIVTT (729 aa)) the chain is on the lumenal side. The interval 43 to 76 (DSGNHWVSTTQGPTTTQSSPTTQTPTTQTPDLPP) is disordered. Over residues 50 to 76 (STTQGPTTTQSSPTTQTPTTQTPDLPP) the composition is skewed to low complexity. 5 O-linked (GalNAc...) threonine glycosylation sites follow: Thr51, Thr52, Thr56, Thr57, and Thr58. Residues Ser60 and Ser61 are each glycosylated (O-linked (GalNAc...) serine). 6 O-linked (GalNAc...) threonine glycosylation sites follow: Thr63, Thr64, Thr66, Thr68, Thr69, and Thr71. A Ca(2+)-binding site is contributed by Leu115. Residue His175 coordinates Zn(2+). N-linked (GlcNAc...) asparagine glycosylation occurs at Asn198. His284 is a binding site for Zn(2+). The active-site Nucleophile is Ser335. Intrachain disulfides connect Cys343–Cys357 and Cys350–Cys365. Residues Asn412 and Asn449 are each glycosylated (N-linked (GlcNAc...) asparagine). An intrachain disulfide couples Cys429 to Cys479. 2 residues coordinate Zn(2+): Glu521 and Tyr560. Residues Asp693, Ser695, and Thr698 each coordinate Ca(2+). The interval 751–761 (GISSPFEIVTT) is required for correct folding and localization.

Belongs to the neutral ceramidase family. It depends on Zn(2+) as a cofactor. In terms of processing, proteolytic cleavage of the N-terminus removes the signal-anchor and produces a soluble form of the protein. Post-translationally, N-glycosylated. Required for enzyme activity. O-glycosylated. Required to retain it as a type II membrane protein at the cell surface. In terms of processing, phosphorylated. May prevent ubiquitination and subsequent degradation. Post-translationally, ubiquitinated, leading to its degradation by the proteasome. Ubiquitination is triggered by nitric oxide. As to expression, highly expressed in brain, kidney and heart. Expressed at lower level in other tissues such as liver. Expressed in intestine, kidney and liver (at protein level). Localizes in the epithelia of the jejunum and ileum.

It is found in the cell membrane. It localises to the membrane raft. The protein localises to the membrane. The protein resides in the caveola. Its subcellular location is the golgi apparatus membrane. It is found in the mitochondrion. It localises to the secreted. The protein localises to the extracellular exosome. It carries out the reaction an N-acylsphing-4-enine + H2O = sphing-4-enine + a fatty acid. The enzyme catalyses N-hexadecanoylsphing-4-enine + H2O = sphing-4-enine + hexadecanoate. The catalysed reaction is N-tetradecanoylsphing-4-enine + H2O = tetradecanoate + sphing-4-enine. It catalyses the reaction N-(9Z-octadecenoyl)-sphing-4-enine + H2O = sphing-4-enine + (9Z)-octadecenoate. It carries out the reaction N-(15Z-tetracosenoyl)-sphing-4-enine + H2O = (15Z)-tetracosenoate + sphing-4-enine. The enzyme catalyses N-octanoylsphing-4-enine + H2O = octanoate + sphing-4-enine. The catalysed reaction is N-dodecanoylsphing-4-enine + H2O = dodecanoate + sphing-4-enine. It catalyses the reaction N-(hexanoyl)sphing-4-enine + H2O = hexanoate + sphing-4-enine. It carries out the reaction N-octadecanoylsphing-4-enine + H2O = sphing-4-enine + octadecanoate. The enzyme catalyses sphinganine + hexadecanoate = N-hexadecanoylsphinganine + H2O. The catalysed reaction is N-(octadecanoyl)-sphinganine + H2O = sphinganine + octadecanoate. It participates in lipid metabolism; sphingolipid metabolism. With respect to regulation, the reverse reaction is inhibited by Zn(2+) and Cu(2+). Inhibited by cardiolipin and phosphatidic acid. In terms of biological role, plasma membrane ceramidase that hydrolyzes sphingolipid ceramides into sphingosine and free fatty acids at neutral pH. Ceramides, sphingosine, and its phosphorylated form sphingosine-1-phosphate are bioactive lipids that mediate cellular signaling pathways regulating several biological processes including cell proliferation, apoptosis and differentiation. Also catalyzes the reverse reaction allowing the synthesis of ceramides from fatty acids and sphingosine. Together with sphingomyelinase, participates in the production of sphingosine and sphingosine-1-phosphate from the degradation of sphingomyelin, a sphingolipid enriched in the plasma membrane of cells. Also participates in the hydrolysis of ceramides from the extracellular milieu allowing the production of sphingosine-1-phosphate inside and outside cells. This is the case for instance with the digestion of dietary sphingolipids in the intestinal tract. The polypeptide is Neutral ceramidase (Asah2) (Rattus norvegicus (Rat)).